The primary structure comprises 354 residues: Methionine aminotransferase BCAT4 (354 aa).

The residue at position 198 (K198) is an N6-(pyridoxal phosphate)lysine.

This sequence belongs to the class-IV pyridoxal-phosphate-dependent aminotransferase family. Pyridoxal 5'-phosphate is required as a cofactor. As to expression, mostly expressed in phloem.

The protein resides in the cytoplasm. It catalyses the reaction a 2-oxocarboxylate + L-methionine = 4-methylsulfanyl-2-oxobutanoate + an L-alpha-amino acid. Its function is as follows. Converts 2-oxo acids to branched-chain amino acids. Shows activity with L-Leu, L-Ile and L-Val as amino donors and alpha-keto-glutarate as an amino acceptor, but no activity for D-isomers of Leu, Ile, Val, Asp, Glu or Ala. Acts on methionine and its derivatives and the corresponding 2-oxo acids. Catalyzes the initial deamination of methionine to 4-methylthio-2-oxobutyrate as well as the transamination of other typical intermediates of the methionine chain elongation pathway. The polypeptide is Methionine aminotransferase BCAT4 (BCAT4) (Arabidopsis thaliana (Mouse-ear cress)).